The primary structure comprises 264 residues: MKKITINDLIKWKQEGRKFATSTAYDASFAQLFESQEMPVLLVGDSLGMVLQGKNDTLPVTVEDIAYHTRCVRAGSPNCLLMADMPFMSYATPEQACENAAQLMRAGANMVKIEGGDWLVDTVKMLTERAVPVCAHLGLTPQSVNIFGGYKVQGRDQEKADRMVKDALALQAAGAQIVLLECVPAELAARITQVLDVPVIGIGAGNVTDGQILVMHDMFGISANYMPKFSKNFLAETGDMRKAVALYMEQVQAGTFPDEAHTIA.

Asp-45 and Asp-84 together coordinate Mg(2+). 3-methyl-2-oxobutanoate-binding positions include 45–46, Asp-84, and Lys-112; that span reads DS. Position 114 (Glu-114) interacts with Mg(2+). Catalysis depends on Glu-181, which acts as the Proton acceptor.

The protein belongs to the PanB family. As to quaternary structure, homodecamer; pentamer of dimers. It depends on Mg(2+) as a cofactor.

The protein localises to the cytoplasm. It catalyses the reaction 3-methyl-2-oxobutanoate + (6R)-5,10-methylene-5,6,7,8-tetrahydrofolate + H2O = 2-dehydropantoate + (6S)-5,6,7,8-tetrahydrofolate. Its pathway is cofactor biosynthesis; (R)-pantothenate biosynthesis; (R)-pantoate from 3-methyl-2-oxobutanoate: step 1/2. In terms of biological role, catalyzes the reversible reaction in which hydroxymethyl group from 5,10-methylenetetrahydrofolate is transferred onto alpha-ketoisovalerate to form ketopantoate. This chain is 3-methyl-2-oxobutanoate hydroxymethyltransferase, found in Vibrio vulnificus (strain YJ016).